Consider the following 265-residue polypeptide: Cytochrome c oxidase subunit 3 (265 aa).

Helical transmembrane passes span 16 to 36 (PWPISGSLGALATTVGGVMYM), 41 to 61 (GGATLLSLGLIFILYTMFVWW), 81 to 101 (GPRYGSISFIVSEVMFLFAFF), 137 to 157 (TPILLSSGAAVTWAHHAILAG), 162 to 182 (AVYALVATVSLALVFTGFQGM), 200 to 220 (FFLATGFHGFHVIIGTLFLII), and 245 to 265 (WHFVDVVRLFPFVSIYWWGGI).

The protein belongs to the cytochrome c oxidase subunit 3 family. Component of the cytochrome c oxidase (complex IV, CIV), a multisubunit enzyme composed of a catalytic core of 3 subunits and several supernumerary subunits. The complex exists as a monomer or a dimer and forms supercomplexes (SCs) in the inner mitochondrial membrane with ubiquinol-cytochrome c oxidoreductase (cytochrome b-c1 complex, complex III, CIII).

The protein localises to the mitochondrion inner membrane. It carries out the reaction 4 Fe(II)-[cytochrome c] + O2 + 8 H(+)(in) = 4 Fe(III)-[cytochrome c] + 2 H2O + 4 H(+)(out). Component of the cytochrome c oxidase, the last enzyme in the mitochondrial electron transport chain which drives oxidative phosphorylation. The respiratory chain contains 3 multisubunit complexes succinate dehydrogenase (complex II, CII), ubiquinol-cytochrome c oxidoreductase (cytochrome b-c1 complex, complex III, CIII) and cytochrome c oxidase (complex IV, CIV), that cooperate to transfer electrons derived from NADH and succinate to molecular oxygen, creating an electrochemical gradient over the inner membrane that drives transmembrane transport and the ATP synthase. Cytochrome c oxidase is the component of the respiratory chain that catalyzes the reduction of oxygen to water. Electrons originating from reduced cytochrome c in the intermembrane space (IMS) are transferred via the dinuclear copper A center (CU(A)) of subunit 2 and heme A of subunit 1 to the active site in subunit 1, a binuclear center (BNC) formed by heme A3 and copper B (CU(B)). The BNC reduces molecular oxygen to 2 water molecules using 4 electrons from cytochrome c in the IMS and 4 protons from the mitochondrial matrix. The chain is Cytochrome c oxidase subunit 3 (COX3) from Vicia faba (Broad bean).